The primary structure comprises 365 residues: Peptide chain release factor 2 (365 aa).

N5-methylglutamine is present on Gln252.

This sequence belongs to the prokaryotic/mitochondrial release factor family. Post-translationally, methylated by PrmC. Methylation increases the termination efficiency of RF2.

Its subcellular location is the cytoplasm. Functionally, peptide chain release factor 2 directs the termination of translation in response to the peptide chain termination codons UGA and UAA. In Pectobacterium atrosepticum (strain SCRI 1043 / ATCC BAA-672) (Erwinia carotovora subsp. atroseptica), this protein is Peptide chain release factor 2.